Reading from the N-terminus, the 113-residue chain is ATP-dependent Clp protease adapter protein ClpS (113 aa).

This sequence belongs to the ClpS family. In terms of assembly, binds to the N-terminal domain of the chaperone ClpA.

Involved in the modulation of the specificity of the ClpAP-mediated ATP-dependent protein degradation. The polypeptide is ATP-dependent Clp protease adapter protein ClpS (Leptospira biflexa serovar Patoc (strain Patoc 1 / Ames)).